Reading from the N-terminus, the 201-residue chain is Imidazoleglycerol-phosphate dehydratase (201 aa).

The protein belongs to the imidazoleglycerol-phosphate dehydratase family.

Its subcellular location is the cytoplasm. It catalyses the reaction D-erythro-1-(imidazol-4-yl)glycerol 3-phosphate = 3-(imidazol-4-yl)-2-oxopropyl phosphate + H2O. It participates in amino-acid biosynthesis; L-histidine biosynthesis; L-histidine from 5-phospho-alpha-D-ribose 1-diphosphate: step 6/9. The polypeptide is Imidazoleglycerol-phosphate dehydratase (Synechococcus sp. (strain CC9902)).